The primary structure comprises 273 residues: Large ribosomal subunit protein uL2 (273 aa).

Disordered regions lie at residues 28-53 and 221-273; these read KPFA…TTRH and RGTA…RRTK. The segment covering 39–48 has biased composition (low complexity); it reads KSGGRNNNGR.

This sequence belongs to the universal ribosomal protein uL2 family. Part of the 50S ribosomal subunit. Forms a bridge to the 30S subunit in the 70S ribosome.

In terms of biological role, one of the primary rRNA binding proteins. Required for association of the 30S and 50S subunits to form the 70S ribosome, for tRNA binding and peptide bond formation. It has been suggested to have peptidyltransferase activity; this is somewhat controversial. Makes several contacts with the 16S rRNA in the 70S ribosome. The polypeptide is Large ribosomal subunit protein uL2 (Pectobacterium atrosepticum (strain SCRI 1043 / ATCC BAA-672) (Erwinia carotovora subsp. atroseptica)).